We begin with the raw amino-acid sequence, 101 residues long: Protein S100-A3 (101 aa).

EF-hand domains lie at 12-47 and 50-85; these read IVCT…TWTP and FREC…LCLY. Lys-26 contributes to the Ca(2+) binding site. Cys-30 and Cys-68 are disulfide-bonded. Arg-51 carries the citrulline; by PAD3 modification. Residues Asp-63, Asn-65, Asp-67, Glu-69, and Glu-74 each coordinate Ca(2+). Zn(2+) contacts are provided by Cys-83, Cys-86, His-87, and Cys-93.

The protein belongs to the S-100 family. As to quaternary structure, homodimer and homotetramer for the citrullinated form. More than half of the arginine residues undergo citrullination by PAD1 and PAD2. Arg-51 is specifically citrullinated by PAD3 and promotes tetramerization. Skin specific, specifically expressed in cuticle of pelage follicle.

The protein resides in the cytoplasm. Binds both calcium and zinc. May be involved in calcium-dependent cuticle cell differentiation, hair shaft and hair cuticular barrier formation. The protein is Protein S100-A3 (S100a3) of Mus musculus (Mouse).